The sequence spans 300 residues: 2-keto-3-deoxy-L-fuconate dehydrogenase (300 aa).

NAD(+)-binding positions include 63-90 and D112; that span reads LITA…IATD. R198 is a substrate binding site. The active-site Proton acceptor is the Y201. NAD(+) contacts are provided by residues K205 and 234 to 238; that span reads IKTPS. 2 residues coordinate substrate: R242 and R260.

It belongs to the short-chain dehydrogenases/reductases (SDR) family.

Plays a role in the catabolism of L-fucose. Catalyzes the NAD(+)-dependent oxidation of 2-keo-3-deoxy-L-fuconate to 2,4-diketo-3-deoxy-L-fuconate. The chain is 2-keto-3-deoxy-L-fuconate dehydrogenase from Xanthomonas campestris pv. campestris (strain ATCC 33913 / DSM 3586 / NCPPB 528 / LMG 568 / P 25).